A 223-amino-acid polypeptide reads, in one-letter code: Trichome differentiation protein GL1 (223 aa).

HTH myb-type domains lie at 11–63 (NQEY…MNYL) and 64–118 (SPNV…SKKL). 2 DNA-binding regions (H-T-H motif) span residues 39–63 (WNRI…MNYL) and 91–114 (WSLI…NTHL).

Its subcellular location is the nucleus. Functionally, regulates the production of a signal that induces hair (trichome) precursor cells on leaf primordia to differentiate. The chain is Trichome differentiation protein GL1 (GL1) from Arabidopsis lyrata (Lyre-leaved rock-cress).